Reading from the N-terminus, the 291-residue chain is Ribosomal large subunit pseudouridine synthase B (291 aa).

The S4 RNA-binding domain occupies 3-75 (EKLQKVLARA…ICRVLAYYKP (73 aa)). Asp-110 (nucleophile) is an active-site residue. The segment at 256-291 (VEKDRRRMKANQIRRAVKRHSQVSGGRRSGGRNNNG) is disordered.

It belongs to the pseudouridine synthase RsuA family.

It catalyses the reaction uridine(2605) in 23S rRNA = pseudouridine(2605) in 23S rRNA. Its function is as follows. Responsible for synthesis of pseudouridine from uracil-2605 in 23S ribosomal RNA. This is Ribosomal large subunit pseudouridine synthase B (rluB) from Escherichia coli O6:H1 (strain CFT073 / ATCC 700928 / UPEC).